The primary structure comprises 336 residues: MAMQAHYEAEATEEEHFGPQAISRLEQCGINANDVKKLEEAGFHTVEAVAYAPKKELLNIKGISEAKAEKILAEAAKLVPMGFTTATEFHQRRSEIIQISTGSKELDKLLQGGVETGSITEMFGEFRTGKTQLCHTLAVTCQLPIDRGGGEGKAMYIDTEGTFRPERLLAVAERYGLSGSDVLDNVAYARAFNTDHQTQLLYQASAMMAESRYALLIVDSATALYRTDYSGRGELSARQMHLARFLRMLLRLADEFGVAVVITNQVVAQVDGAAMFAADPKKPIGGNIIAHASTTRLYLRKGRGETRICKIYDSPCLPEAEAMFAINADGVGDAKD.

Positions 45 to 74 (TVEAVAYAPKKELLNIKGISEAKAEKILAE) constitute a HhH domain. 124 to 131 (GEFRTGKT) serves as a coordination point for ATP. A Nuclear export signal motif is present at residues 242–257 (LARFLRMLLRLADEFG).

This sequence belongs to the RecA family. RAD51 subfamily. Forms linear homooligomers, giving rise to a RAD51 nucleoprotein filament, which is essential for strand-pairing reactions during DNA recombination.

It is found in the nucleus. Its subcellular location is the cytoplasm. The protein localises to the chromosome. Plays an important role in homologous strand exchange, a key step in DNA repair through homologous recombination (HR). Binds to single-stranded DNA in an ATP-dependent manner to form nucleoprotein filaments which are essential for the homology search and strand exchange. Catalyzes the recognition of homology and strand exchange between homologous DNA partners to form a joint molecule between a processed DNA break and the repair template. Recruited to resolve stalled replication forks during replication stress. Also involved in interstrand cross-link repair. The protein is DNA repair protein RAD51 homolog A (rad51-a) of Xenopus laevis (African clawed frog).